The chain runs to 326 residues: BCL2/adenovirus E1B 19 kDa protein-interacting protein 2 (326 aa).

Residues 1-47 (MEGVELKEEWQDEDFPIPLPEDDSIEADTLDGTDPDRQPGSLEVNGN) are disordered. Over residues 10 to 33 (WQDEDFPIPLPEDDSIEADTLDGT) the composition is skewed to acidic residues. Residue serine 41 is modified to Phosphoserine. Phosphothreonine is present on threonine 87. Residues serine 89, serine 92, and serine 114 each carry the phosphoserine modification. Residues 147–304 (IEPYKKVISH…CIKQYEEEKF (158 aa)) enclose the CRAL-TRIO domain.

Its subcellular location is the cytoplasm. It localises to the perinuclear region. Functionally, implicated in the suppression of cell death. Interacts with the BCL-2 and adenovirus E1B 19 kDa proteins. The protein is BCL2/adenovirus E1B 19 kDa protein-interacting protein 2 (Bnip2) of Mus musculus (Mouse).